A 290-amino-acid chain; its full sequence is Ventral anterior homeobox 2 (290 aa).

Residues Met1–Glu17 show a composition bias toward basic and acidic residues. The tract at residues Met1–His75 is disordered. A DNA-binding region (homeobox) is located at residues Pro102–Gln161. Residues Pro205–Pro240 are disordered. The span at Pro222–Ser238 shows a compositional bias: low complexity.

The protein belongs to the EMX homeobox family.

The protein resides in the nucleus. Functionally, transcription factor that may function in dorsoventral specification of the forebrain. Regulates the expression of Wnt signaling antagonists including the expression of a truncated TCF7L2 isoform that cannot bind CTNNB1 and acts therefore as a potent dominant-negative Wnt antagonist. Plays a crucial role in eye development and, in particular, in the specification of the ventral optic vesicle. May be a regulator of axial polarization in the retina. This chain is Ventral anterior homeobox 2 (VAX2), found in Homo sapiens (Human).